Here is a 468-residue protein sequence, read N- to C-terminus: Heparan-sulfate 6-O-sulfotransferase 2 (468 aa).

At 1–9 the chain is on the cytoplasmic side; sequence MDGKSNYSR. Residues 10–30 form a helical; Signal-anchor for type II membrane protein membrane-spanning segment; the sequence is LLIALLMILFFGGIVLQYICS. The Lumenal portion of the chain corresponds to 31–468; that stretch reads TSDWQLLHLA…DYLENVEQWR (438 aa). A glycan (N-linked (GlcNAc...) asparagine) is linked at asparagine 79. 103–111 is a 3'-phosphoadenylyl sulfate binding site; sequence HIQKTGGTT. Residues 133 to 134, arginine 150, tryptophan 155, and histidine 160 each bind substrate; that span reads KK. Histidine 160 acts as the Proton acceptor in catalysis. 3'-phosphoadenylyl sulfate contacts are provided by arginine 197 and serine 205. Residues histidine 209 and tryptophan 216 each contribute to the substrate site. Asparagine 276 carries an N-linked (GlcNAc...) asparagine glycan. 329 to 331 is a 3'-phosphoadenylyl sulfate binding site; the sequence is TQL. Asparagine 332 carries an N-linked (GlcNAc...) asparagine glycan. 335 to 336 serves as a coordination point for 3'-phosphoadenylyl sulfate; it reads RA. Positions 409–447 are disordered; sequence FKPTKEPPMTEQSPAFAEEKQADAERTLESETEGQVEEN. A compositionally biased stretch (basic and acidic residues) spans 425 to 437; the sequence is AEEKQADAERTLE. A compositionally biased stretch (acidic residues) spans 438 to 447; sequence SETEGQVEEN.

Belongs to the sulfotransferase 6 family. In terms of tissue distribution, expressed ubiquitously during gastrulation. During early somitogenesis, strong expression in head and presumptive brain. During mid-somitogenesis, strong expression in eye, hindbrain and somitic boundaries and weak expression in tail bud. During late somitogenesis, strong expression in eye, hindbrain, branchial arch primordia, spinal cord and ventral medial somites. At 24 hours post-fertilization (hpf), strong expression throughout the head, with expression receeding from the trunk spinal cord, ventral medial somites and somitic boundaries; expressed in cells surrounding vascular structures of the dorsal aorta and caudal vein in the tail. At 36 hpf, expressed in lens, optic stalk, hindbrain and pectoral fin. At 48 hpf, expressed in eye, brain, otic vesicle and branchial arches.

It is found in the membrane. The catalysed reaction is alpha-D-glucosaminyl-[heparan sulfate](n) + 3'-phosphoadenylyl sulfate = 6-sulfo-alpha-D-glucosaminyl-[heparan sulfate](n) + adenosine 3',5'-bisphosphate + H(+). In terms of biological role, 6-O-sulfation enzyme which catalyzes the transfer of sulfate from 3'-phosphoadenosine 5'-phosphosulfate (PAPS) to position 6 of the N-sulfoglucosamine residue (GlcNS) of heparan sulfate. Required for muscle development and angiogenesis. This Danio rerio (Zebrafish) protein is Heparan-sulfate 6-O-sulfotransferase 2 (hs6st2).